Reading from the N-terminus, the 117-residue chain is Fluoride-specific ion channel FluC 2 (117 aa).

Transmembrane regions (helical) follow at residues 4 to 24 (FLIG…GDII), 31 to 51 (KFPW…GIIT), 59 to 79 (LSMI…TFMY), and 94 to 114 (LIYI…GEFI). Residues Gly69 and Thr72 each coordinate Na(+).

The protein belongs to the fluoride channel Fluc/FEX (TC 1.A.43) family.

It is found in the cell membrane. It carries out the reaction fluoride(in) = fluoride(out). With respect to regulation, na(+) is not transported, but it plays an essential structural role and its presence is essential for fluoride channel function. Functionally, fluoride-specific ion channel. Important for reducing fluoride concentration in the cell, thus reducing its toxicity. This is Fluoride-specific ion channel FluC 2 from Clostridium acetobutylicum (strain ATCC 824 / DSM 792 / JCM 1419 / IAM 19013 / LMG 5710 / NBRC 13948 / NRRL B-527 / VKM B-1787 / 2291 / W).